A 293-amino-acid polypeptide reads, in one-letter code: Small ribosomal subunit protein uS2 (293 aa).

Residues 265 to 293 are disordered; it reads DGGDWAASSAPAPGGENWAEAQPAEGAKW.

Belongs to the universal ribosomal protein uS2 family. As to quaternary structure, component of the small ribosomal subunit. Mature ribosomes consist of a small (40S) and a large (60S) subunit. The 40S subunit contains about 33 different proteins and 1 molecule of RNA (18S). The 60S subunit contains about 49 different proteins and 3 molecules of RNA (25S, 5.8S and 5S). Interacts with rps21.

Its subcellular location is the cytoplasm. In terms of biological role, required for the assembly and/or stability of the 40S ribosomal subunit. Required for the processing of the 20S rRNA-precursor to mature 18S rRNA in a late step of the maturation of 40S ribosomal subunits. This Emericella nidulans (strain FGSC A4 / ATCC 38163 / CBS 112.46 / NRRL 194 / M139) (Aspergillus nidulans) protein is Small ribosomal subunit protein uS2 (rps0).